The sequence spans 151 residues: ADDEDCCSYEDRREIRHIWDDVWSSSFTDRRVAIVRAVFDDLFKHYPTSKALFERVKIDEPESGEFKSHLVRVANGLDLLINLLDDTLVLQSHLGHLADQHIQRKGVTKEYFRGIGEAFARVLPQVLSCFNVDAWNRCFHRLVARIAKDLP.

A Globin domain is found at 6–151 (CCSYEDRREI…LVARIAKDLP (146 aa)). The cysteines at positions 7 and 138 are disulfide-linked. His101 lines the heme b pocket.

This sequence belongs to the globin family. The extracellular hemoglobin of the earthworm consists of 12 subunits that have a hexagonal bilayer structure with a molecular weight near 3.8 million. Each one-twelfth subunit is composed primarily of disulfide linked trimers (chains A, B, and C) and monomers (chain D).

The protein localises to the secreted. The sequence is that of Extracellular globin-4 from Lumbricus terrestris (Common earthworm).